We begin with the raw amino-acid sequence, 142 residues long: Large ribosomal subunit protein uL13 (142 aa).

Belongs to the universal ribosomal protein uL13 family. As to quaternary structure, part of the 50S ribosomal subunit.

In terms of biological role, this protein is one of the early assembly proteins of the 50S ribosomal subunit, although it is not seen to bind rRNA by itself. It is important during the early stages of 50S assembly. The protein is Large ribosomal subunit protein uL13 of Actinobacillus pleuropneumoniae serotype 5b (strain L20).